A 628-amino-acid polypeptide reads, in one-letter code: Phosphomethylpyrimidine synthase (628 aa).

Residues asparagine 229, methionine 258, tyrosine 287, histidine 323, 343 to 345 (SRG), 384 to 387 (DGLR), and glutamate 423 contribute to the substrate site. Position 427 (histidine 427) interacts with Zn(2+). Residue tyrosine 450 coordinates substrate. Residue histidine 491 coordinates Zn(2+). Positions 571, 574, and 579 each coordinate [4Fe-4S] cluster.

It belongs to the ThiC family. As to quaternary structure, homodimer. Requires [4Fe-4S] cluster as cofactor.

It catalyses the reaction 5-amino-1-(5-phospho-beta-D-ribosyl)imidazole + S-adenosyl-L-methionine = 4-amino-2-methyl-5-(phosphooxymethyl)pyrimidine + CO + 5'-deoxyadenosine + formate + L-methionine + 3 H(+). Its pathway is cofactor biosynthesis; thiamine diphosphate biosynthesis. In terms of biological role, catalyzes the synthesis of the hydroxymethylpyrimidine phosphate (HMP-P) moiety of thiamine from aminoimidazole ribotide (AIR) in a radical S-adenosyl-L-methionine (SAM)-dependent reaction. The chain is Phosphomethylpyrimidine synthase from Variovorax paradoxus (strain S110).